The sequence spans 638 residues: MDSDTSPNPFASSPPSSPSPRPSLPPPVPRKPSSLVSAASGSPPPTHRASFPDPARHPKMGATVPGPKPKTGYCCSIDKDISAGEQVHIVDALKTTEGGTASYITYVIRLGTHTVRRRYSAFLSLHQSLTGLYPVLIIPPIPSKQSLTDYAVKGQSKAREDATIIARRKRLLEDFLQRLIRHPILGGEHVLHRFLEEDVSWSEVLHSPPISLLSKNPLHAPSHNPTFQPTTPTSPSEAPATTSYIAHHLLPTPSPSHPLRQPDQRFMDSEAFTEKFQSHFSGTMEKVNRRVTKRWGERAHDMSELGGIWNGFSLVEQGKLGDAIEKVGRAVDAEYLATAALLQSWEKTTTEPLHIYSQFATLIRARLSFRHQKHVQYELVQEALETQRDKLEILENAEREARRLEEALERGGSVLASPQLEPEAARDERERAQRRARASQGFGLLSAVKHSLSGMIDMDPEATRRANIAKTRDNISQLEDSYQAAAQDLKYASMTLQADLDRFQRQKVADLREMAINLSQVHRDWCKQNLEAWKAAQAAVREIDPHPNRPAQTQTQVQSQQSHAGPSTLHAQTEDDVSKLGVDAMKNEIERVEIEIADKPLPKPSLAETGGDGVVPSPQPRQENDTEEQEGHGPLGPL.

Low complexity predominate over residues 1 to 14 (MDSDTSPNPFASSP). The tract at residues 1 to 69 (MDSDTSPNPF…MGATVPGPKP (69 aa)) is disordered. The span at 15-30 (PSSPSPRPSLPPPVPR) shows a compositional bias: pro residues. One can recognise a PX domain in the interval 84–201 (GEQVHIVDAL…HRFLEEDVSW (118 aa)). Residues Arg118, Ser120, Lys144, and Arg168 each contribute to the a 1,2-diacyl-sn-glycero-3-phospho-(1D-myo-inositol-3-phosphate) site. 3 disordered regions span residues 215-239 (KNPL…SEAP), 408-432 (LERG…RERA), and 545-638 (PHPN…LGPL). Positions 225–239 (PTFQPTTPTSPSEAP) are enriched in low complexity. Residues 423 to 432 (EAARDERERA) show a composition bias toward basic and acidic residues. The span at 552-562 (QTQTQVQSQQS) shows a compositional bias: low complexity. The segment covering 585–601 (MKNEIERVEIEIADKPL) has biased composition (basic and acidic residues).

Belongs to the sorting nexin family.

The protein localises to the endosome membrane. It is found in the endomembrane system. Functionally, may be required for cytoplasm to vacuole transport (Cvt) and pexophagy. The sequence is that of Sorting nexin-41 (SNX41) from Cryptococcus neoformans var. neoformans serotype D (strain JEC21 / ATCC MYA-565) (Filobasidiella neoformans).